The chain runs to 118 residues: Small ribosomal subunit protein uS13 (118 aa).

The disordered stretch occupies residues 94–118 (SLPLRGQRTKTNARTRKGPRKPIKK).

This sequence belongs to the universal ribosomal protein uS13 family. Part of the 30S ribosomal subunit. Forms a loose heterodimer with protein S19. Forms two bridges to the 50S subunit in the 70S ribosome.

Located at the top of the head of the 30S subunit, it contacts several helices of the 16S rRNA. In the 70S ribosome it contacts the 23S rRNA (bridge B1a) and protein L5 of the 50S subunit (bridge B1b), connecting the 2 subunits; these bridges are implicated in subunit movement. Contacts the tRNAs in the A and P-sites. The polypeptide is Small ribosomal subunit protein uS13 (Vibrio parahaemolyticus serotype O3:K6 (strain RIMD 2210633)).